Reading from the N-terminus, the 249-residue chain is Flagellar brake protein YcgR (249 aa).

The PilZ domain maps to 117-236 (QRREFFRVDA…ERELQQVIFS (120 aa)).

Belongs to the YcgR family. As to quaternary structure, monomer. Interacts with the flagellar basal bodies.

The protein localises to the bacterial flagellum basal body. Its function is as follows. Acts as a flagellar brake, regulating swimming and swarming in a bis-(3'-5') cyclic diguanylic acid (c-di-GMP)-dependent manner. Binds 1 c-di-GMP dimer per subunit. Increasing levels of c-di-GMP lead to decreased motility. The sequence is that of Flagellar brake protein YcgR from Erwinia tasmaniensis (strain DSM 17950 / CFBP 7177 / CIP 109463 / NCPPB 4357 / Et1/99).